The sequence spans 897 residues: Translation initiation factor IF-2 (897 aa).

Residues 52-310 (EHGSAPDKLT…LLQQGFQKPA (259 aa)) are disordered. Polar residues predominate over residues 68 to 82 (STLNVPGTGGKSKSV). 2 stretches are compositionally biased toward basic and acidic residues: residues 85-159 (EVRK…KDKV) and 166-217 (EMTK…ENEK). A compositionally biased stretch (basic residues) spans 256-272 (GRTRTASKTARPQKKGN). A compositionally biased stretch (basic and acidic residues) spans 273–286 (KHAESKADREEARA). Residues 396 to 565 (PRAPVVTIMG…LLQAEVLELK (170 aa)) form the tr-type G domain. A G1 region spans residues 405-412 (GHVDHGKT). 405-412 (GHVDHGKT) provides a ligand contact to GTP. A G2 region spans residues 430–434 (GITQH). Positions 451 to 454 (DTPG) are G3. GTP contacts are provided by residues 451-455 (DTPGH) and 505-508 (NKID). The segment at 505-508 (NKID) is G4. The segment at 541–543 (SAK) is G5.

Belongs to the TRAFAC class translation factor GTPase superfamily. Classic translation factor GTPase family. IF-2 subfamily.

The protein resides in the cytoplasm. One of the essential components for the initiation of protein synthesis. Protects formylmethionyl-tRNA from spontaneous hydrolysis and promotes its binding to the 30S ribosomal subunits. Also involved in the hydrolysis of GTP during the formation of the 70S ribosomal complex. The protein is Translation initiation factor IF-2 (infB) of Enterobacter cloacae.